The following is a 254-amino-acid chain: Countin-2 (254 aa).

The first 19 residues, 1–19, serve as a signal peptide directing secretion; it reads MMIKYITIAILFIASLVKA. Residues 22-107 enclose the Saposin B-type domain; it reads QFSLCPTCVD…EELTVCPKNQ (86 aa). Disulfide bonds link Cys26-Cys103, Cys29-Cys97, and Cys56-Cys68. N-linked (GlcNAc...) asparagine glycans are attached at residues Asn110 and Asn219. The interval 231-254 is disordered; that stretch reads QMTGTGSGSGSGSGSSSGAAYLRY. Positions 233–245 are enriched in gly residues; it reads TGTGSGSGSGSGS.

It belongs to the countin family.

Its subcellular location is the secreted. Its function is as follows. Cell-counting factor that limits the minimum size of the multicellular structure. May up-regulate the expression of both gp24 and gp80, which mediate cell adhesion. The sequence is that of Countin-2 (ctnB) from Dictyostelium discoideum (Social amoeba).